A 319-amino-acid chain; its full sequence is Ficolin-2 (319 aa).

Residues 1–22 form the signal peptide; the sequence is MVLGSAALFVLSLCVTELTLHA. Positions 45 to 101 constitute a Collagen-like domain; the sequence is GCPGLPGALGPKGEAGAKGDRGESGLPGHPGKAGPTGPKGDRGEKGVRGEKGDTGPS. The tract at residues 53 to 106 is disordered; the sequence is LGPKGEAGAKGDRGESGLPGHPGKAGPTGPKGDRGEKGVRGEKGDTGPSQSCAT. Positions 83–97 are enriched in basic and acidic residues; that stretch reads KGDRGEKGVRGEKGD. The region spanning 102–319 is the Fibrinogen C-terminal domain; that stretch reads QSCATGPRTC…KVSEMKVRLI (218 aa). 2 disulfides stabilise this stretch: C104–C132 and C111–C139. The Ca(2+) site is built by D255, D257, and S261. C263 and C276 form a disulfide bridge. Residue N306 is glycosylated (N-linked (GlcNAc...) asparagine).

Belongs to the ficolin lectin family. As to quaternary structure, homotrimer. Interacts with elastin. Interacts with MASP1 and MASP2.

It localises to the secreted. In terms of biological role, may function in innate immunity through activation of the lectin complement pathway. Calcium-dependent and GlcNAc-binding lectin. This is Ficolin-2 (Fcn2) from Rattus norvegicus (Rat).